The sequence spans 415 residues: Putative O-antigen transporter (415 aa).

At 1 to 11 (MNTNKLSLRRN) the chain is on the cytoplasmic side. The helical transmembrane segment at 12-32 (VIYLAVVQGSNYLLPLLTFPY) threads the bilayer. Over 33 to 41 (LVRTLGPEN) the chain is Periplasmic. The helical transmembrane segment at 42–62 (FGIFGFCQATMLYMIMFVEYG) threads the bilayer. Residues 63 to 83 (FNLTATQSIAKAADSKDKVTS) are Cytoplasmic-facing. The helical transmembrane segment at 84–104 (IFWAVIFSKIVLIVITLIFLT) threads the bilayer. Residues 105–117 (SMTLLVPEYNKHA) lie on the Periplasmic side of the membrane. Residues 118 to 138 (VIIWSFVPALVGNLIYPIWLF) form a helical membrane-spanning segment. Residues 139-173 (QGKEKMKWLTLSSILSRLAIIPLTFIFVNTKSDIA) are Cytoplasmic-facing. Residues 174-194 (IAGFIQSSANLVAGIIALAIV) traverse the membrane as a helical segment. The Periplasmic portion of the chain corresponds to 195–220 (VHEGWIGKVTLSLHNVRRSLADGFHV). A helical transmembrane segment spans residues 221–241 (FISTSAISLYSTGIVIILGFI). The Cytoplasmic segment spans residues 242–295 (SGPTSVGNFNAANTIRNALQGLLNPITQAIYPRISSTLVLNRVKGVILIKKSLT). Residues 296–316 (CLSLIGGAFSLILLLGASILV) traverse the membrane as a helical segment. The Periplasmic segment spans residues 317–328 (KISIGPGYDNAV). The helical transmembrane segment at 329 to 349 (IVLMIISPLPFLISLSNVYGI) threads the bilayer. Over 350 to 362 (QVMLTHNYKKEFS) the chain is Cytoplasmic. Residues 363–383 (KILIAAGLLSLLLIFPLTTLF) form a helical membrane-spanning segment. The Periplasmic segment spans residues 384–385 (KE). A helical membrane pass occupies residues 386 to 406 (IGAAITLLATECLVTSLMLMF). The Cytoplasmic portion of the chain corresponds to 407-415 (VRNNKLLVC).

It belongs to the polysaccharide synthase family.

The protein resides in the cell inner membrane. It functions in the pathway bacterial outer membrane biogenesis; LPS O-antigen biosynthesis. Its function is as follows. May be involved in the translocation process of the nascent O-polysaccharide molecules and/or its ligation to lipid A core units. In Escherichia coli (strain K12), this protein is Putative O-antigen transporter (rfbX).